A 241-amino-acid polypeptide reads, in one-letter code: Sugar fermentation stimulation protein homolog (241 aa).

The protein belongs to the SfsA family.

This Jannaschia sp. (strain CCS1) protein is Sugar fermentation stimulation protein homolog.